The following is a 397-amino-acid chain: Pyruvate dehydrogenase E1 component subunit alpha, mitochondrial (397 aa).

Positions 98, 124, 125, 173, 175, 204, 205, 206, 233, and 235 each coordinate pyruvate. Thiamine diphosphate contacts are provided by Tyr-124, Arg-125, Gly-173, Val-175, Asp-204, Gly-205, Ala-206, and Asn-233. Asp-204 is a Mg(2+) binding site. Asn-233 and Tyr-235 together coordinate Mg(2+). His-299 contacts thiamine diphosphate.

In terms of assembly, tetramer of 2 alpha and 2 beta subunits. It depends on thiamine diphosphate as a cofactor. Mg(2+) serves as cofactor.

Its subcellular location is the mitochondrion matrix. The enzyme catalyses N(6)-[(R)-lipoyl]-L-lysyl-[protein] + pyruvate + H(+) = N(6)-[(R)-S(8)-acetyldihydrolipoyl]-L-lysyl-[protein] + CO2. Its activity is regulated as follows. E1 activity is regulated by phosphorylation (inactivation) and dephosphorylation (activation) of the alpha subunit. Its function is as follows. The pyruvate dehydrogenase complex catalyzes the overall conversion of pyruvate to acetyl-CoA and CO(2). It contains multiple copies of three enzymatic components: pyruvate dehydrogenase (E1), dihydrolipoamide acetyltransferase (E2) and lipoamide dehydrogenase (E3). This Pisum sativum (Garden pea) protein is Pyruvate dehydrogenase E1 component subunit alpha, mitochondrial.